The sequence spans 282 residues: NFU1 iron-sulfur cluster scaffold homolog, mitochondrial (282 aa).

The N-terminal 27 residues, 1-27 (MSKLLSYTARIILRNSRITVRQLVRGF), are a transit peptide targeting the mitochondrion. Residues 178–246 (IKELLDTRIR…IPEVESVEQV (69 aa)) are nifU. [4Fe-4S] cluster contacts are provided by Cys215 and Cys218. A disordered region spans residues 263–282 (KNLKQKEPAGAPVGIGGGPN).

The protein belongs to the NifU family.

The protein resides in the mitochondrion. Functionally, molecular scaffold for [Fe-S] cluster assembly of mitochondrial iron-sulfur proteins. This is NFU1 iron-sulfur cluster scaffold homolog, mitochondrial from Drosophila persimilis (Fruit fly).